Reading from the N-terminus, the 389-residue chain is MGQNLSVSNPLGFFPEHQLDPLFKANSNNPDWDFNPNKDNWPEATKVGVGAFGPGFTPPHGGLLGWSSQAQGAITTLPALPPPAATNRQSGRQPTPISPPLRDTHPQAMKWNSTVFHQTLQDPRVRGLYFPVGGSSSGTVNPVPTTASHISSIFSRTGDPAPNMENITSGFLGPLLVLQAGFFLLTKILTIPQSLDSWWTSLNFLGGAPVCPGQNSQSPTSNHSPTSCPPICPGYRWMCLRRFIIFLFILLLCLIFLLVLLDYQGMLPVCPLLPGSSTTSTGPCRTCTITAQGTSLYPSCCCTKPSDGNCTCIPIPSSWAFAKFLWEWASVRFSWLSLLAPFVQWFAGLSPTAWLLVIWMIWYWGPNLYNILNPFIPLLPIFFCLWVYI.

M1 carries the N-acetylmethionine modification. Residue G2 is the site of N-myristoyl glycine; by host attachment. Residues 2 to 108 are pre-S1; the sequence is GQNLSVSNPL…PPLRDTHPQA (107 aa). The pre-S stretch occupies residues 2-163; sequence GQNLSVSNPL…FSRTGDPAPN (162 aa). Over 2-170 the chain is Virion surface; in external conformation; it reads GQNLSVSNPL…APNMENITSG (169 aa). Residues 2-242 are Intravirion; in internal conformation-facing; it reads GQNLSVSNPL…PGYRWMCLRR (241 aa). The disordered stretch occupies residues 79 to 99; that stretch reads ALPPPAATNRQSGRQPTPISP. The pre-S2 stretch occupies residues 109–163; sequence MKWNSTVFHQTLQDPRVRGLYFPVGGSSSGTVNPVPTTASHISSIFSRTGDPAPN. Residues 171–191 form a helical membrane-spanning segment; sequence FLGPLLVLQAGFFLLTKILTI. The Intravirion; in external conformation portion of the chain corresponds to 192–242; sequence PQSLDSWWTSLNFLGGAPVCPGQNSQSPTSNHSPTSCPPICPGYRWMCLRR. Residues 243–263 traverse the membrane as a helical segment; it reads FIIFLFILLLCLIFLLVLLDY. At 264-337 the chain is on the virion surface side; sequence QGMLPVCPLL…WASVRFSWLS (74 aa). N309 is a glycosylation site (N-linked (GlcNAc...) asparagine; by host). A helical membrane pass occupies residues 338 to 358; that stretch reads LLAPFVQWFAGLSPTAWLLVI. Over 359–364 the chain is Intravirion; it reads WMIWYW. Residues 365 to 387 form a helical membrane-spanning segment; that stretch reads GPNLYNILNPFIPLLPIFFCLWV. The Virion surface portion of the chain corresponds to 388–389; sequence YI.

This sequence belongs to the orthohepadnavirus major surface antigen family. In its internal form (Li-HBsAg), interacts with the capsid protein and with the isoform S. Interacts with host chaperone CANX. In terms of assembly, associates with host chaperone CANX through its pre-S2 N glycan; this association may be essential for isoform M proper secretion. As to quaternary structure, interacts with isoform L. Interacts with the antigens of satellite virus HDV (HDVAgs); this interaction is required for encapsidation of HDV genomic RNA. Post-translationally, isoform M is N-terminally acetylated by host at a ratio of 90%, and N-glycosylated by host at the pre-S2 region. Myristoylated.

Its subcellular location is the virion membrane. Its function is as follows. The large envelope protein exists in two topological conformations, one which is termed 'external' or Le-HBsAg and the other 'internal' or Li-HBsAg. In its external conformation the protein attaches the virus to cell receptors and thereby initiating infection. This interaction determines the species specificity and liver tropism. This attachment induces virion internalization predominantly through caveolin-mediated endocytosis. The large envelope protein also assures fusion between virion membrane and endosomal membrane. In its internal conformation the protein plays a role in virion morphogenesis and mediates the contact with the nucleocapsid like a matrix protein. The middle envelope protein plays an important role in the budding of the virion. It is involved in the induction of budding in a nucleocapsid independent way. In this process the majority of envelope proteins bud to form subviral lipoprotein particles of 22 nm of diameter that do not contain a nucleocapsid. In Hylobatidae (gibbons), this protein is Large envelope protein.